Consider the following 499-residue polypeptide: Cytochrome P450 monooxygenase notH' (499 aa).

A helical transmembrane segment spans residues 11 to 31 (LGLEPAGWALALLTSSIIYLF). N296 and N427 each carry an N-linked (GlcNAc...) asparagine glycan. Residue C440 coordinates heme.

It belongs to the cytochrome P450 family. The cofactor is heme.

It localises to the membrane. It participates in alkaloid biosynthesis. Its function is as follows. Cytochrome P450 monooxygenase; part of the gene cluster that mediates the biosynthesis of notoamide, a fungal indole alkaloid that belongs to a family of natural products containing a characteristic bicyclo[2.2.2]diazaoctane core. The first step of notoamide biosynthesis involves coupling of L-proline and L-tryptophan by the bimodular NRPS notE', to produce cyclo-L-tryptophan-L-proline called brevianamide F. The reverse prenyltransferase notF' then acts as a deoxybrevianamide E synthase and converts brevianamide F to deoxybrevianamide E via reverse prenylation at C-2 of the indole ring leading to the bicyclo[2.2.2]diazaoctane core. Deoxybrevianamide E is further hydroxylated at C-6 of the indole ring, likely catalyzed by the cytochrome P450 monooxygenase notG', to yield 6-hydroxy-deoxybrevianamide E. 6-hydroxy-deoxybrevianamide E is a specific substrate of the prenyltransferase notC' for normal prenylation at C-7 to produce 6-hydroxy-7-prenyl-deoxybrevianamide, also called notoamide S. As the proposed pivotal branching point in notoamide biosynthesis, notoamide S can be diverted to notoamide E through an oxidative pyran ring closure putatively catalyzed by either notH' cytochrome P450 monooxygenase or the notD' FAD-linked oxidoreductase. This step would be followed by an indole 2,3-epoxidation-initiated pinacol-like rearrangement catalyzed by the notB' FAD-dependent monooxygenase leading to the formation of notoamide C and notoamide D. On the other hand notoamide S is converted to notoamide T by notH' (or notD'), a bifunctional oxidase that also functions as the intramolecular Diels-Alderase responsible for generation of (-)-notoamide T. To generate antipodal (+)-notoaminide T, notH (or notD) in Aspergillus strain MF297-2 is expected to catalyze a Diels-Alder reaction leading to the opposite stereochemistry. The remaining oxidoreductase notD' (or notH') likely catalyzes the oxidative pyran ring formation to yield (-)-stephacidin A. The FAD-dependent monooxygenase notI' is highly similar to notB' and is predicted to catalyze a similar conversion from (-)-stephacidin A to (+)-notoamide B via the 2,3-epoxidation of (-)-stephacidin A followed by a pinacol-type rearrangement. Finally, it remains unclear which enzyme could be responsible for the final hydroxylation steps leading to notoamide A and sclerotiamide. The sequence is that of Cytochrome P450 monooxygenase notH' from Aspergillus versicolor.